The following is a 71-amino-acid chain: Translation initiation factor IF-1 (71 aa).

Residues Met-1 to Lys-71 enclose the S1-like domain.

This sequence belongs to the IF-1 family. In terms of assembly, component of the 30S ribosomal translation pre-initiation complex which assembles on the 30S ribosome in the order IF-2 and IF-3, IF-1 and N-formylmethionyl-tRNA(fMet); mRNA recruitment can occur at any time during PIC assembly.

The protein resides in the cytoplasm. Functionally, one of the essential components for the initiation of protein synthesis. Stabilizes the binding of IF-2 and IF-3 on the 30S subunit to which N-formylmethionyl-tRNA(fMet) subsequently binds. Helps modulate mRNA selection, yielding the 30S pre-initiation complex (PIC). Upon addition of the 50S ribosomal subunit IF-1, IF-2 and IF-3 are released leaving the mature 70S translation initiation complex. The chain is Translation initiation factor IF-1 from Mycoplasmopsis synoviae (strain 53) (Mycoplasma synoviae).